A 342-amino-acid polypeptide reads, in one-letter code: Isopentenyl-diphosphate delta-isomerase (342 aa).

11-12 (RK) provides a ligand contact to substrate. FMN is bound by residues Ser68, 69 to 71 (SMT), Ser99, and Asn128. 99 to 101 (SQR) is a binding site for substrate. Gln162 contributes to the substrate binding site. Glu163 lines the Mg(2+) pocket. Residues Lys194, Ser219, Thr224, 275–277 (GVR), and 296–297 (AK) each bind FMN.

This sequence belongs to the IPP isomerase type 2 family. Homooctamer. Dimer of tetramers. Requires FMN as cofactor. The cofactor is NADPH. Mg(2+) is required as a cofactor.

It is found in the cytoplasm. The catalysed reaction is isopentenyl diphosphate = dimethylallyl diphosphate. Functionally, involved in the biosynthesis of isoprenoids. Catalyzes the 1,3-allylic rearrangement of the homoallylic substrate isopentenyl (IPP) to its allylic isomer, dimethylallyl diphosphate (DMAPP). This chain is Isopentenyl-diphosphate delta-isomerase, found in Legionella pneumophila (strain Paris).